We begin with the raw amino-acid sequence, 179 residues long: UPF0227 protein VC0395_A1482/VC395_2007 (179 aa).

It belongs to the UPF0227 family.

The sequence is that of UPF0227 protein VC0395_A1482/VC395_2007 from Vibrio cholerae serotype O1 (strain ATCC 39541 / Classical Ogawa 395 / O395).